A 161-amino-acid polypeptide reads, in one-letter code: Myosin regulatory light chain (161 aa).

Phosphoserine is present on residues Ser-13 and Ser-14. EF-hand domains follow at residues 20 to 55 (EQVAELKEAFELFDKDRTGFIKKDALKTTCKQFGVF), 56 to 91 (VMEDQLDAMFAEADTTKSGAIGFPEFMSMMSRRMKQ), and 93 to 128 (SNEQILMNAFKTFDPEGNGYILTKDLSKALTTLGDK).

Myosin is a hexamer of 2 heavy chains and 4 light chains (two regulatory light chains and two essential light chains).

The sequence is that of Myosin regulatory light chain (mlcR) from Dictyostelium discoideum (Social amoeba).